The primary structure comprises 40 residues: Large ribosomal subunit protein bL36 (40 aa).

Belongs to the bacterial ribosomal protein bL36 family.

The protein is Large ribosomal subunit protein bL36 of Corynebacterium jeikeium (strain K411).